A 341-amino-acid polypeptide reads, in one-letter code: tRNA N6-adenosine threonylcarbamoyltransferase (341 aa).

Positions 111 and 115 each coordinate Fe cation. Residues 134–138, aspartate 167, glycine 180, and asparagine 270 each bind substrate; that span reads LVSGG. Position 298 (aspartate 298) interacts with Fe cation.

Belongs to the KAE1 / TsaD family. Requires Fe(2+) as cofactor.

Its subcellular location is the cytoplasm. It carries out the reaction L-threonylcarbamoyladenylate + adenosine(37) in tRNA = N(6)-L-threonylcarbamoyladenosine(37) in tRNA + AMP + H(+). In terms of biological role, required for the formation of a threonylcarbamoyl group on adenosine at position 37 (t(6)A37) in tRNAs that read codons beginning with adenine. Is involved in the transfer of the threonylcarbamoyl moiety of threonylcarbamoyl-AMP (TC-AMP) to the N6 group of A37, together with TsaE and TsaB. TsaD likely plays a direct catalytic role in this reaction. The sequence is that of tRNA N6-adenosine threonylcarbamoyltransferase from Thiobacillus denitrificans (strain ATCC 25259 / T1).